A 231-amino-acid chain; its full sequence is Probable septum site-determining protein MinC (231 aa).

The segment at 102–125 (KEKAPRPAPAPQAPTQNTTPVTKT) is disordered. Over residues 114 to 123 (APTQNTTPVT) the composition is skewed to low complexity.

Belongs to the MinC family. Interacts with MinD and FtsZ.

In terms of biological role, cell division inhibitor that blocks the formation of polar Z ring septums. Rapidly oscillates between the poles of the cell to destabilize FtsZ filaments that have formed before they mature into polar Z rings. Prevents FtsZ polymerization. This chain is Probable septum site-determining protein MinC, found in Escherichia coli O45:K1 (strain S88 / ExPEC).